Consider the following 74-residue polypeptide: Sodium channel neurotoxin MeuNaTxalpha-6 (74 aa).

Residues 1–7 form the signal peptide; that stretch reads LMTGVES. Positions 9 to 73 constitute an LCN-type CS-alpha/beta domain; the sequence is RDAYIAKPHN…VPIRIPGKCH (65 aa). 4 cysteine pairs are disulfide-bonded: cysteine 19–cysteine 72, cysteine 23–cysteine 45, cysteine 31–cysteine 55, and cysteine 35–cysteine 57. Residue arginine 74 is a propeptide, removed by a carboxypeptidase.

This sequence belongs to the long (4 C-C) scorpion toxin superfamily. Sodium channel inhibitor family. Alpha subfamily. As to expression, expressed by the venom gland.

The protein resides in the secreted. In terms of biological role, alpha toxins bind voltage-independently at site-3 of sodium channels (Nav) and inhibit the inactivation of the activated channels, thereby blocking neuronal transmission. In Mesobuthus eupeus (Lesser Asian scorpion), this protein is Sodium channel neurotoxin MeuNaTxalpha-6.